Here is a 361-residue protein sequence, read N- to C-terminus: 24-methylenesterol C-methyltransferase 2 (361 aa).

The protein belongs to the class I-like SAM-binding methyltransferase superfamily. Erg6/SMT family.

It catalyses the reaction 24-methylidenelophenol + S-adenosyl-L-methionine = (Z)-24-ethylidenelophenol + S-adenosyl-L-homocysteine + H(+). It participates in steroid biosynthesis; sterol biosynthesis. Functionally, catalyzes the methyl transfer from S-adenosyl-methionine to the methylene group of 24-methylene lophenol to form 24-ethylidene lophenol. The polypeptide is 24-methylenesterol C-methyltransferase 2 (SMT2) (Arabidopsis thaliana (Mouse-ear cress)).